The following is a 71-amino-acid chain: Protein PSY3 (71 aa).

Positions 1–25 (MGYSSSSRIGLCLFLFFTFALLSSA) are cleaved as a signal peptide. Positions 26–49 (RISLSFSENEMTVVPERSLMVSTN) are excised as a propeptide. The tract at residues 47–71 (STNDYSDPTANGRHDPPRGGRGRRR) is disordered. Tyr51 carries the post-translational modification Sulfotyrosine. The residue at position 63 (Pro63) is a 4-hydroxyproline. Pro63 carries an O-linked (Ara...) hydroxyproline glycan. A propeptide spanning residues 66 to 71 (GRGRRR) is cleaved from the precursor.

This sequence belongs to the sulfated-peptide plant hormone family. In terms of processing, the sulfation and the glycosylation are required for full activity.

It localises to the secreted. In terms of biological role, promotes cellular proliferation and expansion. The sequence is that of Protein PSY3 (PSY3) from Arabidopsis thaliana (Mouse-ear cress).